Here is a 318-residue protein sequence, read N- to C-terminus: Transaldolase (318 aa).

Catalysis depends on Lys132, which acts as the Schiff-base intermediate with substrate.

The protein belongs to the transaldolase family. Type 1 subfamily. In terms of assembly, homodimer.

The protein resides in the cytoplasm. The catalysed reaction is D-sedoheptulose 7-phosphate + D-glyceraldehyde 3-phosphate = D-erythrose 4-phosphate + beta-D-fructose 6-phosphate. Its pathway is carbohydrate degradation; pentose phosphate pathway; D-glyceraldehyde 3-phosphate and beta-D-fructose 6-phosphate from D-ribose 5-phosphate and D-xylulose 5-phosphate (non-oxidative stage): step 2/3. Its function is as follows. Transaldolase is important for the balance of metabolites in the pentose-phosphate pathway. The protein is Transaldolase of Shewanella woodyi (strain ATCC 51908 / MS32).